Reading from the N-terminus, the 740-residue chain is Homeobox protein 4 (740 aa).

Residues 1–13 (MNTVEENNTKITD) show a composition bias toward polar residues. Disordered stretches follow at residues 1-41 (MNTV…ENLS) and 179-491 (NNNN…NNEI). Low complexity-rich tracts occupy residues 14–34 (NNNN…NNKN), 179–241 (NNNN…PQQN), 251–288 (NNNN…NNNN), and 303–316 (STTD…SVPS). The stretch at 254–287 (NINNNNINKNNNNYNNNNNNKNNNNNNNNNNNNN) forms a coiled coil. A compositionally biased stretch (basic residues) spans 317–328 (NKKKSSKTKQKS). Residues 339–363 (HKSNYHQQPNQNSQHLQSKPNSPIL) are compositionally biased toward polar residues. Composition is skewed to low complexity over residues 365-390 (SSPL…SPPQ) and 397-491 (NNNF…NNEI). The stretch at 472–500 (NTNTNNNNNKNNNNNNNNEIENNNNEELI) forms a coiled coil. The homeobox DNA-binding region spans 605–667 (RPKKGAKLSK…NTRRRKVPTL (63 aa)). Over residues 686 to 722 (NNNNNNGGNSNFKNNNNNTITTTSTSNNNNNNNNNNH) the composition is skewed to low complexity. The tract at residues 686-740 (NNNNNNGGNSNFKNNNNNTITTTSTSNNNNNNNNNNHNEMECDDGENEESSEYDD) is disordered. Positions 726 to 740 (ECDDGENEESSEYDD) are enriched in acidic residues.

It is found in the nucleus. Putative transcription factor. The polypeptide is Homeobox protein 4 (hbx4) (Dictyostelium discoideum (Social amoeba)).